The following is a 1357-amino-acid chain: DNA-directed RNA polymerase subunit beta (1357 aa).

The protein belongs to the RNA polymerase beta chain family. As to quaternary structure, the RNAP catalytic core consists of 2 alpha, 1 beta, 1 beta' and 1 omega subunit. When a sigma factor is associated with the core the holoenzyme is formed, which can initiate transcription.

The enzyme catalyses RNA(n) + a ribonucleoside 5'-triphosphate = RNA(n+1) + diphosphate. Functionally, DNA-dependent RNA polymerase catalyzes the transcription of DNA into RNA using the four ribonucleoside triphosphates as substrates. This is DNA-directed RNA polymerase subunit beta from Pseudomonas putida (Arthrobacter siderocapsulatus).